A 440-amino-acid polypeptide reads, in one-letter code: WAS/WASL-interacting protein family member 2 (440 aa).

The span at M1–T18 shows a compositional bias: pro residues. Positions M1–G36 are disordered. The 18-residue stretch at G36 to V53 folds into the WH2 domain. R37 carries the asymmetric dimethylarginine modification. The interval K49–K52 is binds actin. Disordered regions lie at residues I56–T387 and R419–R440. Residues P116–R133 are compositionally biased toward low complexity. The span at R161–H172 shows a compositional bias: polar residues. Composition is skewed to pro residues over residues A176–L193, E222–P236, A249–P262, and R356–L378.

Belongs to the verprolin family. In terms of assembly, interacts with WASL and WASP, and this interaction results in cytoplasmic relocation of these two proteins along actin filaments. Interacts with NCK2 resulting in the localization to sites of focal adhesions. No interaction was seen with WASF2 and WASF3. Expressed mainly in brain, colon, lung and stomach (at protein level). Ubiquitously expressed, with high expression in brain, kidney, lung, and placenta.

The protein resides in the cytoplasm. It is found in the cytoskeleton. In terms of biological role, plays an active role in the formation of cell surface protrusions downstream of activated PDGFB receptors. Plays an important role in actin-microspike formation through cooperation with WASL. May cooperate with WASP and WASL to induce mobilization and reorganization of the actin filament system. The chain is WAS/WASL-interacting protein family member 2 (WIPF2) from Homo sapiens (Human).